Here is a 487-residue protein sequence, read N- to C-terminus: MSDDKPFLCTAPGCGQRFTNEDHLAVHKHKHEMTLKFGPARNDSVIVADQTPTPTRFLKNCEEVGLFNELASPFENEFKKASEDDIKKMPLDLSPLATPIIRNKIEEPSVVETTHQDSPLPHPESTTNDEKEVSLQQTAQPTSTIVRPASLQVPNVLLTSSDSSVIIQQAIPSPTSSTVITQAPSSNRPIVPVPGPFPLLLHLPNGQTMPVAIPASITNSNVHVPAAVPLVRPVTMVPSIPGIPGPSSPQPVQSEAKLRLKAALTQQHPQVTNGDTAKGHPSGLVRTQSEEPRPQSLQQPATSTTETPASPAQPTQQTPNTGGRRRRAANEDPDEKRRKFLERNRAAASRCRQKRKVWVQSLEKKAEDLSSLNGQLQNEVTLLRNEVAQLKQLLLAHKDCPVTAMQKKSGYHTADKDDSSEDISVPSSPHTEAIQHSSVSTSNGVSSTSKAEAVATSVLTQLADQSSEPGLPQVGVVPPSQAQPSGS.

The C2H2-type zinc finger occupies 7 to 31 (FLCTAPGCGQRFTNEDHLAVHKHKH). 2 disordered regions span residues 106 to 132 (EEPS…DEKE) and 267 to 354 (QHPQ…CRQK). Positions 298–319 (QQPATSTTETPASPAQPTQQTP) are enriched in low complexity. The segment covering 328–345 (AANEDPDEKRRKFLERNR) has biased composition (basic and acidic residues). One can recognise a bZIP domain in the interval 334–397 (DEKRRKFLER…AQLKQLLLAH (64 aa)). Residues 336–356 (KRRKFLERNRAAASRCRQKRK) are basic motif. The leucine-zipper stretch occupies residues 362 to 390 (LEKKAEDLSSLNGQLQNEVTLLRNEVAQL). A Nuclear export signal motif is present at residues 387-396 (VAQLKQLLLA). The tract at residues 407 to 487 (KKSGYHTADK…PPSQAQPSGS (81 aa)) is disordered. Residues 425-436 (VPSSPHTEAIQH) show a composition bias toward polar residues. Positions 437 to 449 (SSVSTSNGVSSTS) are enriched in low complexity. Polar residues predominate over residues 457 to 468 (SVLTQLADQSSE).

Belongs to the bZIP family. ATF subfamily. As to quaternary structure, binds DNA as a dimer and can form a homodimer in the absence of DNA. Can form a heterodimer with JUN. Heterodimerization is essential for its transcriptional activity.

It localises to the nucleus. Its subcellular location is the cytoplasm. It is found in the mitochondrion outer membrane. Functionally, transcriptional activator which regulates the transcription of various genes, including those involved in anti-apoptosis, cell growth, and DNA damage response. Dependent on its binding partner, binds to CRE (cAMP response element) consensus sequences (5'-TGACGTCA-3') or to AP-1 (activator protein 1) consensus sequences (5'-TGACTCA-3'). The sequence is that of Cyclic AMP-dependent transcription factor ATF-2 (ATF2) from Gallus gallus (Chicken).